Consider the following 297-residue polypeptide: Large ribosomal subunit protein uL18 (297 aa).

G2 is subject to N-acetylglycine. N6-acetyllysine occurs at positions 5 and 48. Residue S185 is modified to Phosphoserine. Position 220 is an N6-acetyllysine; alternate (K220). Residue K220 forms a Glycyl lysine isopeptide (Lys-Gly) (interchain with G-Cter in SUMO1); alternate linkage. A Glycyl lysine isopeptide (Lys-Gly) (interchain with G-Cter in SUMO2); alternate cross-link involves residue K220. T232 carries the phosphothreonine modification. Residues 253-297 (YEKKPKREVKKKRWNRPKMSLAQKKDRVAQKKASFLRAQERAAES) are disordered. Residues 258–268 (KREVKKKRWNR) show a composition bias toward basic residues. S272 bears the Phosphoserine mark.

Belongs to the universal ribosomal protein uL18 family. Component of the large ribosomal subunit (LSU). Part of the 5S RNP complex, which is a LSU subcomplex composed of the 5S RNA, RPL5 and RPL11. Component of a hexameric 5S RNP precursor complex, composed of 5S RNA, RRS1, RPF2/BXDC1, RPL5, RPL11 and HEATR3; this complex acts as a precursor for ribosome assembly. Interacts with NVL in an ATP-dependent manner. Interacts with RRP1B. Interacts with IPO5, IPO7 and KPNB1; these interactions may be involved in RPL5 nuclear import for the assembly of ribosomal subunits.

It localises to the cytoplasm. The protein resides in the nucleus. The protein localises to the nucleolus. Component of the ribosome, a large ribonucleoprotein complex responsible for the synthesis of proteins in the cell. The small ribosomal subunit (SSU) binds messenger RNAs (mRNAs) and translates the encoded message by selecting cognate aminoacyl-transfer RNA (tRNA) molecules. The large subunit (LSU) contains the ribosomal catalytic site termed the peptidyl transferase center (PTC), which catalyzes the formation of peptide bonds, thereby polymerizing the amino acids delivered by tRNAs into a polypeptide chain. The nascent polypeptides leave the ribosome through a tunnel in the LSU and interact with protein factors that function in enzymatic processing, targeting, and the membrane insertion of nascent chains at the exit of the ribosomal tunnel. As part of the 5S RNP/5S ribonucleoprotein particle it is an essential component of the LSU, required for its formation and the maturation of rRNAs. It also couples ribosome biogenesis to p53/TP53 activation. As part of the 5S RNP it accumulates in the nucleoplasm and inhibits MDM2, when ribosome biogenesis is perturbed, mediating the stabilization and the activation of TP53. The chain is Large ribosomal subunit protein uL18 (Rpl5) from Mus musculus (Mouse).